The sequence spans 396 residues: Elongation factor Tu (396 aa).

The 196-residue stretch at 10-205 folds into the tr-type G domain; the sequence is KPHVNIGTIG…ACDDSIPDPE (196 aa). The segment at 19–26 is G1; that stretch reads GHVDHGKT. 19–26 is a binding site for GTP; sequence GHVDHGKT. T26 lines the Mg(2+) pocket. The segment at 62 to 66 is G2; it reads GITIN. The tract at residues 83-86 is G3; that stretch reads DAPG. Residues 83–87 and 138–141 contribute to the GTP site; these read DAPGH and NKCD. The segment at 138–141 is G4; the sequence is NKCD. The tract at residues 175 to 177 is G5; it reads SAL.

This sequence belongs to the TRAFAC class translation factor GTPase superfamily. Classic translation factor GTPase family. EF-Tu/EF-1A subfamily. In terms of assembly, monomer.

Its subcellular location is the cytoplasm. The enzyme catalyses GTP + H2O = GDP + phosphate + H(+). Its function is as follows. GTP hydrolase that promotes the GTP-dependent binding of aminoacyl-tRNA to the A-site of ribosomes during protein biosynthesis. This is Elongation factor Tu from Corynebacterium aurimucosum (strain ATCC 700975 / DSM 44827 / CIP 107346 / CN-1) (Corynebacterium nigricans).